We begin with the raw amino-acid sequence, 426 residues long: Melibiose/raffinose/stachyose-binding protein MelE (426 aa).

Residues 1 to 18 form the signal peptide; that stretch reads MKHTFVLFLSLILLVLPG. Cysteine 19 carries the N-palmitoyl cysteine lipid modification. The S-diacylglycerol cysteine moiety is linked to residue cysteine 19.

Belongs to the bacterial solute-binding protein 1 family. The complex is composed of two ATP-binding proteins (MsmX), two transmembrane proteins (MelC and MelD) and a solute-binding protein (MelE).

It localises to the cell membrane. Part of the ABC transporter complex MelEDC-MsmX involved in melibiose, raffinose and stachyose import. Binds melibiose, raffinose and stachyose. In Bacillus subtilis (strain 168), this protein is Melibiose/raffinose/stachyose-binding protein MelE.